A 465-amino-acid chain; its full sequence is Ribulose bisphosphate carboxylase large chain (465 aa).

At Lys-4 the chain carries N6,N6,N6-trimethyllysine. 2 residues coordinate substrate: Asn-113 and Thr-163. The active-site Proton acceptor is Lys-165. Substrate is bound at residue Lys-167. Positions 191, 193, and 194 each coordinate Mg(2+). Lys-191 is modified (N6-carboxylysine). Residue His-284 is the Proton acceptor of the active site. Substrate is bound by residues Arg-285, His-317, and Ser-369.

The protein belongs to the RuBisCO large chain family. Type I subfamily. Heterohexadecamer of 8 large chains and 8 small chains; disulfide-linked. The disulfide link is formed within the large subunit homodimers. It depends on Mg(2+) as a cofactor. The disulfide bond which can form in the large chain dimeric partners within the hexadecamer appears to be associated with oxidative stress and protein turnover.

Its subcellular location is the plastid. It localises to the chloroplast. The catalysed reaction is 2 (2R)-3-phosphoglycerate + 2 H(+) = D-ribulose 1,5-bisphosphate + CO2 + H2O. It carries out the reaction D-ribulose 1,5-bisphosphate + O2 = 2-phosphoglycolate + (2R)-3-phosphoglycerate + 2 H(+). RuBisCO catalyzes two reactions: the carboxylation of D-ribulose 1,5-bisphosphate, the primary event in carbon dioxide fixation, as well as the oxidative fragmentation of the pentose substrate in the photorespiration process. Both reactions occur simultaneously and in competition at the same active site. The chain is Ribulose bisphosphate carboxylase large chain from Idesia polycarpa (Iigiri tree).